Reading from the N-terminus, the 87-residue chain is Phosphoribosyl-ATP pyrophosphatase (87 aa).

The protein belongs to the PRA-PH family.

The protein localises to the cytoplasm. The catalysed reaction is 1-(5-phospho-beta-D-ribosyl)-ATP + H2O = 1-(5-phospho-beta-D-ribosyl)-5'-AMP + diphosphate + H(+). It participates in amino-acid biosynthesis; L-histidine biosynthesis; L-histidine from 5-phospho-alpha-D-ribose 1-diphosphate: step 2/9. This Pseudarthrobacter chlorophenolicus (strain ATCC 700700 / DSM 12829 / CIP 107037 / JCM 12360 / KCTC 9906 / NCIMB 13794 / A6) (Arthrobacter chlorophenolicus) protein is Phosphoribosyl-ATP pyrophosphatase.